A 95-amino-acid polypeptide reads, in one-letter code: NELL2-interacting cell ontogeny regulator 1 (95 aa).

A signal peptide spans 1 to 34 (MAPPPACRSPMSPPPPPLLLLLLSLALLGARARA).

The protein belongs to the NICOL family. In terms of assembly, interacts with NELL2; triggers epididymal differentiation. Interacts with cell surface receptor TFRC; the interaction mediates uptake of NICOL1 into fibroblasts. Detected in the brain (at protein level). Also expressed at low levels in the kidney, primarily in tubular epithelial cells.

It is found in the secreted. The protein localises to the cytoplasm. It localises to the perinuclear region. MRNA-binding protein which interacts with a range of target mRNAs including SERPINE1, ACTA2, CCN2 and COL4A1 and may promote extracellular matrix production. Binds to the 3'-UTR of SERPINE1 mRNA and stabilizes the mRNA, possibly by competing for binding with SERBP1 and preventing SERBP1-mediated mRNA degradation. Also binds to the 3'-UTR of ACTA2. Testis-derived lumicrine factor that triggers epididymal differentiation and sperm maturation. The chain is NELL2-interacting cell ontogeny regulator 1 from Homo sapiens (Human).